The chain runs to 1136 residues: DNA-directed RNA polymerase I subunit RPA2 (1136 aa).

The segment at 1–24 (MDPGSRWRNLPSGPSLKHLTDPSY) is disordered. R180 is an RNA binding site. Residues 194 to 208 (VRPKWKTRGPGYTHY) form a loop B region. The interval 236–247 (LNFIYRKELFFL) is loop A. RNA is bound at residue D367. Fork loop stretches follow at residues 439–453 (LRSK…DSGL) and 474–489 (RGAD…VRRL). K890 contributes to the RNA binding site. 2 residues coordinate DNA: R1020 and R1036. S1051 is modified (phosphoserine). 4 residues coordinate Zn(2+): C1071, C1074, C1099, and C1102. Residues 1071 to 1102 (CVKCGSLLSPLLEKPPPSWSAMRNRKYNCTLC) form a C4-type zinc finger.

It belongs to the RNA polymerase beta chain family. As to quaternary structure, component of the RNA polymerase I (Pol I) complex consisting of 13 subunits: a ten-subunit catalytic core composed of POLR1A/RPA1, POLR1B/RPA2, POLR1C/RPAC1, POLR1D/RPAC2, POLR1H/RPA12, POLR2E/RPABC1, POLR2F/RPABC2, POLR2H/RPABC3, POLR2K/RPABC4 and POLR2L/RPABC5; a mobile stalk subunit POLR1F/RPA43 protruding from the core and additional subunits homologous to general transcription factors POLR1E/RPA49 and POLR1G/RPA34. Part of Pol I pre-initiation complex (PIC), in which Pol I core assembles with RRN3 and promoter-bound UTBF and SL1/TIF-IB complex.

The protein localises to the nucleus. Its subcellular location is the nucleolus. It localises to the chromosome. The catalysed reaction is RNA(n) + a ribonucleoside 5'-triphosphate = RNA(n+1) + diphosphate. In terms of biological role, catalytic core component of RNA polymerase I (Pol I), a DNA-dependent RNA polymerase which synthesizes ribosomal RNA precursors using the four ribonucleoside triphosphates as substrates. Transcribes 47S pre-rRNAs from multicopy rRNA gene clusters, giving rise to 5.8S, 18S and 28S ribosomal RNAs. Pol I-mediated transcription cycle proceeds through transcription initiation, transcription elongation and transcription termination stages. During transcription initiation, Pol I pre-initiation complex (PIC) is recruited by the selectivity factor 1 (SL1/TIF-IB) complex bound to the core promoter that precedes an rDNA repeat unit. The PIC assembly bends the promoter favoring the formation of the transcription bubble and promoter escape. Once the polymerase has escaped from the promoter it enters the elongation phase during which RNA is actively polymerized, based on complementarity with the template DNA strand. Highly processive, assembles in structures referred to as 'Miller trees' where many elongating Pol I complexes queue and transcribe the same rDNA coding regions. At terminator sequences downstream of the rDNA gene, PTRF interacts with Pol I and halts Pol I transcription leading to the release of the RNA transcript and polymerase from the DNA. Forms Pol I active center together with the largest subunit POLR1A/RPA1. Appends one nucleotide at a time to the 3' end of the nascent RNA, with POLR1A/RPA1 contributing a Mg(2+)-coordinating DxDGD motif, and POLR1B/RPA2 providing lysine residues believed to facilitate Watson-Crick base pairing between the incoming nucleotide and the template base. Typically, Mg(2+) ions direct a 5' nucleoside triphosphate to form a phosphodiester bond with the 3' hydroxyl of the preceding nucleotide of the nascent RNA, with the elimination of pyrophosphate. Has proofreading activity: Pauses and backtracks to allow the cleavage of a missincorporated nucleotide via POLR1H/RPA12. High Pol I processivity is associated with decreased transcription fidelity. The sequence is that of DNA-directed RNA polymerase I subunit RPA2 (POLR1B) from Pongo abelii (Sumatran orangutan).